The primary structure comprises 310 residues: 4-hydroxyproline 2-epimerase (310 aa).

Cysteine 88 serves as the catalytic Proton acceptor. Substrate-binding positions include 89 to 90, histidine 208, and aspartate 232; that span reads GH. Cysteine 236 acts as the Proton donor in catalysis. 237–238 provides a ligand contact to substrate; it reads GT.

It belongs to the proline racemase family.

The enzyme catalyses trans-4-hydroxy-L-proline = cis-4-hydroxy-D-proline. Its function is as follows. Catalyzes the epimerization of trans-4-hydroxy-L-proline (t4LHyp) to cis-4-hydroxy-D-proline (c4DHyp). Is likely involved in a degradation pathway that converts t4LHyp to alpha-ketoglutarate. Displays no proline racemase activity. The protein is 4-hydroxyproline 2-epimerase of Acinetobacter baumannii (strain AYE).